We begin with the raw amino-acid sequence, 248 residues long: Triosephosphate isomerase (248 aa).

Asn-11–Lys-13 lines the substrate pocket. His-95 (electrophile) is an active-site residue. The Proton acceptor role is filled by Glu-167. Substrate-binding positions include Gly-173, Ser-212, and Gly-233–Gly-234.

Belongs to the triosephosphate isomerase family. In terms of assembly, homodimer.

Its subcellular location is the cytoplasm. It catalyses the reaction D-glyceraldehyde 3-phosphate = dihydroxyacetone phosphate. Its pathway is carbohydrate biosynthesis; gluconeogenesis. It participates in carbohydrate degradation; glycolysis; D-glyceraldehyde 3-phosphate from glycerone phosphate: step 1/1. Functionally, involved in the gluconeogenesis. Catalyzes stereospecifically the conversion of dihydroxyacetone phosphate (DHAP) to D-glyceraldehyde-3-phosphate (G3P). In Ralstonia nicotianae (strain ATCC BAA-1114 / GMI1000) (Ralstonia solanacearum), this protein is Triosephosphate isomerase.